We begin with the raw amino-acid sequence, 469 residues long: Phosphatidylinositol 4-kinase type 2-beta (469 aa).

The tract at residues 1-84 (MAEACEPTRP…LDRTRTTSSE (84 aa)) is disordered. A Phosphoserine modification is found at Ser-37. Residues 108 to 439 (GVFPERISQG…AQMPCVIVEC (332 aa)) enclose the PI3K/PI4K catalytic domain. The segment at 114 to 120 (ISQGSSG) is G-loop. Ser-121 and Lys-136 together coordinate ATP. An important for substrate binding region spans residues 141–143 (EPY). Positions 149 to 162 (KWTKYVHKVCCPCC) are important for interaction with membranes. Residues 245–248 (QLFV) and 259–260 (RR) contribute to the ATP site. Positions 252–260 (KEAEYWLRR) are important for interaction with membranes. The segment at 289–297 (RNTDRGNDN) is catalytic loop. The segment at 330–350 (AIDNGLAFPFKHPDEWRAYPF) is activation loop. Asp-332 provides a ligand contact to ATP. The tract at residues 345 to 354 (WRAYPFHWAW) is important for interaction with membranes.

This sequence belongs to the PI3/PI4-kinase family. Type II PI4K subfamily.

It localises to the cytoplasm. Its subcellular location is the cytosol. The protein localises to the golgi apparatus membrane. The protein resides in the endoplasmic reticulum membrane. It is found in the cell membrane. It localises to the early endosome membrane. The enzyme catalyses a 1,2-diacyl-sn-glycero-3-phospho-(1D-myo-inositol) + ATP = a 1,2-diacyl-sn-glycero-3-phospho-(1D-myo-inositol 4-phosphate) + ADP + H(+). Functionally, together with PI4K2A and the type III PI4Ks (PIK4CA and PIK4CB) it contributes to the overall PI4-kinase activity of the cell. This contribution may be especially significant in plasma membrane, endosomal and Golgi compartments. The phosphorylation of phosphatidylinositol (PI) to PI4P is the first committed step in the generation of phosphatidylinositol 4,5-bisphosphate (PIP2), a precursor of the second messenger inositol 1,4,5-trisphosphate (InsP3). Contributes to the production of InsP3 in stimulated cells and is likely to be involved in the regulation of vesicular trafficking. The protein is Phosphatidylinositol 4-kinase type 2-beta (Pi4k2b) of Mus musculus (Mouse).